The sequence spans 34 residues: Phallacidin proprotein 1 (34 aa).

Positions 1–10 (MSDINATRLP) are excised as a propeptide. Positions 11 to 17 (AWLVDCP) form a cross-link, cyclopeptide (Ala-Pro). The segment at residues 12-16 (WLVDC) is a cross-link (2'-cysteinyl-6'-hydroxytryptophan sulfoxide (Trp-Cys)). The propeptide occupies 18-34 (CVGDDVNRLLTRGESLC).

This sequence belongs to the MSDIN fungal toxin family. In terms of processing, processed by the macrocyclase-peptidase enzyme POPB to yield a toxic cyclic heptapeptide. POPB first removes 10 residues from the N-terminus. Conformational trapping of the remaining peptide forces the enzyme to release this intermediate rather than proceed to macrocyclization. The enzyme rebinds the remaining peptide in a different conformation and catalyzes macrocyclization of the N-terminal 7 residues.

Functionally, major toxin that belongs to the bicyclic heptapeptides called phallotoxins. Although structurally related to amatoxins, phallotoxins have a different mode of action, which is the stabilization of F-actin. Phallotoxins are poisonous when administered parenterally, but not orally because of poor absorption. This chain is Phallacidin proprotein 1, found in Amanita bisporigera (Destroying angel).